The primary structure comprises 218 residues: uncharacterized protein (218 aa).

Belongs to the mimivirus L6/L7/L57 family.

This is an uncharacterized protein from Acanthamoeba polyphaga mimivirus (APMV).